The sequence spans 156 residues: Arginine repressor (156 aa).

The protein belongs to the ArgR family.

It is found in the cytoplasm. Its pathway is amino-acid biosynthesis; L-arginine biosynthesis [regulation]. Its function is as follows. Regulates arginine biosynthesis genes. This chain is Arginine repressor, found in Enterobacter sp. (strain 638).